The primary structure comprises 207 residues: Uridine kinase (207 aa).

14–21 (GGSGSGKT) serves as a coordination point for ATP.

It belongs to the uridine kinase family.

The protein resides in the cytoplasm. The enzyme catalyses uridine + ATP = UMP + ADP + H(+). It carries out the reaction cytidine + ATP = CMP + ADP + H(+). It participates in pyrimidine metabolism; CTP biosynthesis via salvage pathway; CTP from cytidine: step 1/3. It functions in the pathway pyrimidine metabolism; UMP biosynthesis via salvage pathway; UMP from uridine: step 1/1. The sequence is that of Uridine kinase from Deinococcus deserti (strain DSM 17065 / CIP 109153 / LMG 22923 / VCD115).